We begin with the raw amino-acid sequence, 279 residues long: MNANSTTTAIGLTSPFEKLSFFPHSSNLILAHLHEIIFSFVFYQLAFSVVAPFLNKVVFRKHYTTIRDPLLKIDFNVHTVSMIQAVVSNTVLLPTLTTPMHYNVVTYTDSYSSMVSSLSAGYFIWDLTMCVRYFKLYGLEFTGHAIGSVYVMLLSLRPFCQPWIGRFLIYEASTPFVNINWFIMQCNAKSKNSIPLWFNVVNGLLLMTVFFVVRICWGSIASALLFRQMWKVRDELPKFSAVTMMSLNIFMNLLNVLWFKKMIRIAKKLAKPAPTSKLD.

Topologically, residues 1-32 are extracellular; it reads MNANSTTTAIGLTSPFEKLSFFPHSSNLILAH. Residues 33–53 form a helical membrane-spanning segment; sequence LHEIIFSFVFYQLAFSVVAPF. Residues 54-79 are Cytoplasmic-facing; the sequence is LNKVVFRKHYTTIRDPLLKIDFNVHT. Residues 70 to 271 enclose the TLC domain; the sequence is LLKIDFNVHT…MIRIAKKLAK (202 aa). The chain crosses the membrane as a helical span at residues 80 to 100; the sequence is VSMIQAVVSNTVLLPTLTTPM. Residues 101–110 lie on the Extracellular side of the membrane; it reads HYNVVTYTDS. A helical transmembrane segment spans residues 111–131; sequence YSSMVSSLSAGYFIWDLTMCV. Residues 132–135 lie on the Cytoplasmic side of the membrane; sequence RYFK. A helical transmembrane segment spans residues 136 to 156; sequence LYGLEFTGHAIGSVYVMLLSL. Residues 157–162 lie on the Extracellular side of the membrane; it reads RPFCQP. The helical transmembrane segment at 163 to 183 threads the bilayer; sequence WIGRFLIYEASTPFVNINWFI. The Cytoplasmic portion of the chain corresponds to 184 to 192; the sequence is MQCNAKSKN. The chain crosses the membrane as a helical span at residues 193 to 213; the sequence is SIPLWFNVVNGLLLMTVFFVV. Topologically, residues 214-238 are extracellular; that stretch reads RICWGSIASALLFRQMWKVRDELPK. A helical transmembrane segment spans residues 239–259; the sequence is FSAVTMMSLNIFMNLLNVLWF. The Cytoplasmic portion of the chain corresponds to 260 to 279; the sequence is KKMIRIAKKLAKPAPTSKLD.

It belongs to the TMEM56 family.

It is found in the membrane. The polypeptide is Topoisomerase I damage affected protein 4 (TDA4) (Saccharomyces cerevisiae (strain ATCC 204508 / S288c) (Baker's yeast)).